An 853-amino-acid chain; its full sequence is Lysine-specific histone demethylase 1A (853 aa).

The interval 1-177 is disordered; it reads MLSGKKAAAA…EPEEPSGVEG (177 aa). Residues 7–26 show a composition bias toward low complexity; sequence AAAAAAAAAAAAAAGTEAGS. Thr-60 carries the phosphothreonine modification. Over residues 76 to 97 the composition is skewed to low complexity; the sequence is AEPPGSAGPQAGPTAGPGSATP. At Thr-105 the chain carries Phosphothreonine. Residues 111–152 adopt a coiled-coil conformation; that stretch reads TSRRKRAKVEYREMDESLANLSEDEYYSEEERNAKAEKEKKL. Phosphoserine is present on residues Ser-127 and Ser-132. At Tyr-136 the chain carries Phosphotyrosine. Position 138 is a phosphoserine (Ser-138). Basic and acidic residues predominate over residues 139-152; the sequence is EEERNAKAEKEKKL. Residues 161–173 are compositionally biased toward acidic residues; sequence PEEENESEPEEPS. A Phosphoserine modification is found at Ser-167. In terms of domain architecture, SWIRM spans 175–274; it reads VEGAAFQSRL…FGIYKRIKPL (100 aa). FAD-binding positions include Ser-290, Glu-309, Arg-311, Arg-317, and 333–334; that span reads MV. The segment at 301 to 853 is demethylase activity; sequence FGMDVTLLEA…GVPAQQSPSM (553 aa). Residues 429-515 are a coiled coil; the sequence is IEHWKKIVKT…EEKLQELEAN (87 aa). N6-acetyllysine occurs at positions 433, 434, and 437. Glycyl lysine isopeptide (Lys-Gly) (interchain with G-Cter in SUMO2) cross-links involve residues Lys-443 and Lys-470. Lys-504 participates in a covalent cross-link: Glycyl lysine isopeptide (Lys-Gly) (interchain with G-Cter in ubiquitin). Ser-612 carries the phosphoserine modification. Residues Glu-802 and 811 to 812 contribute to the FAD site; that span reads TV. Ser-850 is subject to Phosphoserine.

The protein belongs to the flavin monoamine oxidase family. Component of a histone demethylase complex with RCOR1. Component of a BHC histone deacetylase complex that contains HDAC1, HDAC2, HMG20B, KDM1A, RCOR1 and PHF21A. The BHC complex may also contain ZMYM2, ZNF217, ZMYM3, GSE1 and GTF2I. In the complex, RCOR1 strongly enhances the demethylase activity and protects it from the proteasome while PHF21A inhibits the demethylase activity. Interacts with the androgen receptor (AR). Component of a RCOR/GFI/KDM1A/HDAC complex. Interacts directly with GFI1 and GFI1B. Interacts with SNAI1 (via SNAG domain). Interacts with INSM1. Interacts (via AOD/Tower domain) with JADE2 (via C-terminus). Interacts with ESRRB; co-occupes the core set of ESRRB targets. Interacts with SAMD1 (via WH domain); the interaction modulates KDM1A function. Interacts with RBPJ. Interacts with L3MBTL3. Interacts with ZMYND8. FAD is required as a cofactor. In terms of processing, acetylated by KAT8 in epithelial but not in mesenchymal cells, thereby regulating the epithelial-to-mesenchymal transition. Acetylation by KAT8 reduces KDM1A association with nucleosomes, thereby decreasing histone H3 demethylation, leading to transcription activatio of target genes. Polyubiquitinated by JADE2; which leads to its proteasomal degradation. Deubiquitinated by USP38; preventing it from degradation by the 26S proteasome. In terms of tissue distribution, ubiquitously expressed.

It is found in the nucleus. The protein resides in the chromosome. It catalyses the reaction N(6),N(6)-dimethyl-L-lysyl(4)-[histone H3] + 2 A + 2 H2O = L-lysyl(4)-[histone H3] + 2 formaldehyde + 2 AH2. With respect to regulation, the N-terminal sequences of INSM1 and SNAI1 compete with histone H3 for the same binding site and thereby inhibit histone demethylation (in vitro). Functionally, histone demethylase that can demethylate both 'Lys-4' (H3K4me) and 'Lys-9' (H3K9me) of histone H3, thereby acting as a coactivator or a corepressor, depending on the context. Acts by oxidizing the substrate by FAD to generate the corresponding imine that is subsequently hydrolyzed. Acts as a corepressor by mediating demethylation of H3K4me, a specific tag for epigenetic transcriptional activation. Demethylates both mono- (H3K4me1) and di-methylated (H3K4me2) H3K4me. May play a role in the repression of neuronal genes. Alone, it is unable to demethylate H3K4me on nucleosomes and requires the presence of RCOR1/CoREST to achieve such activity. Also acts as a coactivator of androgen receptor (ANDR)-dependent transcription, by being recruited to ANDR target genes and mediating demethylation of H3K9me, a specific tag for epigenetic transcriptional repression. The presence of PRKCB in ANDR-containing complexes, which mediates phosphorylation of 'Thr-6' of histone H3 (H3T6ph), a specific tag that prevents demethylation H3K4me, prevents H3K4me demethylase activity of KDM1A. Demethylates di-methylated 'Lys-370' of p53/TP53 which prevents interaction of p53/TP53 with TP53BP1 and represses p53/TP53-mediated transcriptional activation. Demethylates and stabilizes the DNA methylase DNMT1. Demethylates methylated 'Lys-44' and methylated 'Lys-119' of SOX2. Required for gastrulation during embryogenesis. Component of a RCOR/GFI/KDM1A/HDAC complex that suppresses, via histone deacetylase (HDAC) recruitment, a number of genes implicated in multilineage blood cell development. Facilitates epithelial-to-mesenchymal transition by acting as an effector of SNAI1-mediated transcription repression of epithelial markers E-cadherin/CDH1, CDN7 and KRT8. Required for the maintenance of the silenced state of the SNAI1 target genes E-cadherin/CDH1 and CDN7. Required for the repression of GIPR expression. This is Lysine-specific histone demethylase 1A from Mus musculus (Mouse).